The sequence spans 483 residues: Regulatory protein ViaA (483 aa).

It belongs to the ViaA family. Homodimer. Interacts with RavA.

It is found in the cytoplasm. Component of the RavA-ViaA chaperone complex, which may act on the membrane to optimize the function of some of the respiratory chains. ViaA stimulates the ATPase activity of RavA. The chain is Regulatory protein ViaA from Escherichia coli O6:K15:H31 (strain 536 / UPEC).